The primary structure comprises 1473 residues: Ovostatin (1473 aa).

An N-terminal signal peptide occupies residues 1–36 (MHCFLGREILSFFCLTVRKMWLKFILAILLLHAAAG). N-linked (GlcNAc...) asparagine glycans are attached at residues N67, N82, N89, N191, N342, N403, N527, N588, N757, N1141, N1221, N1315, and N1347.

Belongs to the protease inhibitor I39 (alpha-2-macroglobulin) family. Homotetramer, which consists of two pairs of disulfide-linked chains. Post-translationally, lacks the thioester bond found in other members of this family. In terms of processing, glycosylated; contains 56 glucosamine units per subunit.

It is found in the secreted. In terms of biological role, is able to inhibit all four classes of proteinases by a unique 'trapping' mechanism. This protein has a peptide stretch, called the 'bait region' which contains specific cleavage sites for different proteinases. When a proteinase cleaves the bait region, a conformational change is induced in the protein which traps the proteinase. The entrapped enzyme remains active against low molecular weight substrates (activity against high molecular weight substrates is greatly reduced). The protein is Ovostatin of Gallus gallus (Chicken).